We begin with the raw amino-acid sequence, 177 residues long: Ribulose bisphosphate carboxylase small subunit, chloroplastic 2 (177 aa).

A chloroplast-targeting transit peptide spans 1–56 (MASSMMASTAAVARAGPAQSNMVAPFNGLRSSVAFPATRKANKNLSTLPSNGGKVS).

Belongs to the RuBisCO small chain family. As to quaternary structure, heterohexadecamer of 8 large and 8 small subunits.

The protein resides in the plastid. The protein localises to the chloroplast. Its function is as follows. RuBisCO catalyzes two reactions: the carboxylation of D-ribulose 1,5-bisphosphate, the primary event in carbon dioxide fixation, as well as the oxidative fragmentation of the pentose substrate. Both reactions occur simultaneously and in competition at the same active site. Although the small subunit is not catalytic it is essential for maximal activity. The chain is Ribulose bisphosphate carboxylase small subunit, chloroplastic 2 from Lemna gibba (Swollen duckweed).